A 165-amino-acid chain; its full sequence is Urease accessory protein UreE (165 aa).

The interval 137–156 (EAGAYQSAPHGHSHAHGHDH) is disordered.

This sequence belongs to the UreE family.

The protein resides in the cytoplasm. Involved in urease metallocenter assembly. Binds nickel. Probably functions as a nickel donor during metallocenter assembly. In Pseudomonas putida (strain GB-1), this protein is Urease accessory protein UreE.